The following is a 503-amino-acid chain: Maturase K (503 aa).

The protein belongs to the intron maturase 2 family. MatK subfamily.

The protein resides in the plastid. It localises to the chloroplast. Its function is as follows. Usually encoded in the trnK tRNA gene intron. Probably assists in splicing its own and other chloroplast group II introns. The sequence is that of Maturase K from Actinodium cunninghamii (Albany daisy).